The sequence spans 800 residues: Protein MICRORCHIDIA 4 (800 aa).

2 disordered regions span residues 1 to 76 (MEPI…ARSD) and 552 to 702 (AKRQ…RTLS). Over residues 9–18 (NPVTTSTLST) the composition is skewed to polar residues. Residues 36–47 (ELSSSNEGSELG) show a composition bias toward low complexity. Composition is skewed to basic and acidic residues over residues 559–578 (SAKD…EFDP) and 628–641 (VSKD…EKGG). Acidic residues predominate over residues 666 to 675 (NSDDDYDCDS). A coiled-coil region spans residues 699–766 (RTLSQLEQEN…QASLIDVFAE (68 aa)). 2 consecutive short sequence motifs (nuclear localization signal) follow at residues 716-723 (DKKEEVFL) and 735-742 (LRKTLEAE).

Belongs to the MORC ATPase protein family. Homodimer and heterodimer. Component of an RNA-directed DNA methylation (RdDM) complex. Forms homomeric complexes. It depends on Mg(2+) as a cofactor. The cofactor is Mn(2+).

The protein resides in the nucleus. Functionally, exhibits ATPase activity. Binds DNA/RNA in a non-specific manner and exhibits endonuclease activity. Probably involved in DNA repair. Involved in RNA-directed DNA methylation (RdDM) as a component of the RdDM machinery and required for gene silencing. May also be involved in the regulation of chromatin architecture to maintain gene silencing. Together with MORC7, acts to suppress a wide set of non-methylated protein-coding genes, especially involved in pathogen response. Positive regulator of defense against the oomycete Hyaloperonospora arabidopsidis (Hpa). The chain is Protein MICRORCHIDIA 4 from Arabidopsis thaliana (Mouse-ear cress).